A 514-amino-acid chain; its full sequence is Peptide chain release factor 3 (514 aa).

The 261-residue stretch at 8 to 268 (KKRRTFAIIS…TFLKFAPEPH (261 aa)) folds into the tr-type G domain. GTP contacts are provided by residues 17–24 (SHPDAGKT), 85–89 (DTPGH), and 139–142 (NKLD).

The protein belongs to the TRAFAC class translation factor GTPase superfamily. Classic translation factor GTPase family. PrfC subfamily.

The protein resides in the cytoplasm. In terms of biological role, increases the formation of ribosomal termination complexes and stimulates activities of RF-1 and RF-2. It binds guanine nucleotides and has strong preference for UGA stop codons. It may interact directly with the ribosome. The stimulation of RF-1 and RF-2 is significantly reduced by GTP and GDP, but not by GMP. The polypeptide is Peptide chain release factor 3 (Streptococcus pneumoniae (strain Hungary19A-6)).